A 1004-amino-acid chain; its full sequence is MSELFDEAPRDPGPPARSGSRRSRALIVTAVVLVIGFLGLSTFAGIYTDRLWYVSGGYGAVFTTLFWTKTVLFFLFGAGMALVVGVNIYLAYRFRPFFRPNSPEQNGLDRYREAINPIRTWLLVGVALVLGAFAGSSAIGEWRDYLLWRNGTSFGSEDAYFQKDIGFYVFDLPWLHYLVDYAMAVLVVALIAAAVVHYLYGGIRLQTPRDRLSGAAQAQISVLLGFFVLAKAADYWLDRFDLVSQGGGVITGMTYTDDHAVLPAKNILLGISIICAVLFFVNVWRRTWLLPSVGLALLAVSAILLGLIWPGIVQQFQVKPSEADKEAPYIEKNIEATRTAYDVANVDVEKYDPATALGAGSASMVEEETSSVPLVDPQLVRDAFEQNQQVRAYYSVAQVLDVDRYDIDGNDRALVLGVRELDQSGMNAGDRNWTNLHTVYTHGNGIIAAFANQRSEDNKTQIDNADNTGDQAGIVWAQGTNAGQDALARATGGFEDRIYYGEQSPQYSVVGKATPDSTDVELNLQTAGSDEGSTTTYDGNGDASVGGFFNQLMFATKFGEPNFLLSGRVNPNSKVLFNRNPADRVEKVAPWLTVDSDPYPAVVDGRILWIIDGYTTTDRYPLSEKESFQTMIDDSLQEETGLRTLPTDEINYMRNAVKATVDAYTGDVTLYAWDEEDPILQAWRSAFPGTVEDKSEISDDLLDHLRYPEDLFQVQRYQFARYHVTEPIDFYQGNNRWQVPEDPYSKGKFQPPYRLFVDSNGGTDQVFALTSVYVPYNKNNLASFVSVNADATSDQYGQMQVLELPNEQTPGPGQVANQFATDPEVANELAQFNRSGARPVYGNLLTLPINDGLMYVQPVYATQALSDSSFPILRYVLVKYGNDIGFGSTLRDALENLLGVSTGPGTQPPDTGQPGDNENPPPATGTVAAQIRALLAQAQDAFDAADAALADGNLAEYQRQIGIAQANVEAAMELGQKRGSAGQPSGSPSGSASSSPSESPSPSS.

The disordered stretch occupies residues 1–20 (MSELFDEAPRDPGPPARSGS). Transmembrane regions (helical) follow at residues 26–46 (LIVTAVVLVIGFLGLSTFAGI), 71–91 (VLFFLFGAGMALVVGVNIYLA), 120–140 (TWLLVGVALVLGAFAGSSAIG), 183–203 (MAVLVVALIAAAVVHYLYGGI), 212–232 (LSGAAQAQISVLLGFFVLAKA), 261–281 (VLPAKNILLGISIICAVLFFV), and 293–313 (VGLALLAVSAILLGLIWPGIV). Disordered regions lie at residues 899–924 (GVSTGPGTQPPDTGQPGDNENPPPAT) and 974–1004 (LGQKRGSAGQPSGSPSGSASSSPSESPSPSS). Composition is skewed to low complexity over residues 903 to 916 (GPGTQPPDTGQPGD) and 979 to 1004 (GSAGQPSGSPSGSASSSPSESPSPSS).

Belongs to the UPF0182 family.

Its subcellular location is the cell membrane. The polypeptide is UPF0182 protein Noca_1530 (Nocardioides sp. (strain ATCC BAA-499 / JS614)).